Reading from the N-terminus, the 115-residue chain is Large ribosomal subunit protein bL19 (115 aa).

It belongs to the bacterial ribosomal protein bL19 family.

This protein is located at the 30S-50S ribosomal subunit interface and may play a role in the structure and function of the aminoacyl-tRNA binding site. This chain is Large ribosomal subunit protein bL19, found in Nitrosococcus oceani (strain ATCC 19707 / BCRC 17464 / JCM 30415 / NCIMB 11848 / C-107).